The chain runs to 692 residues: Glycine--tRNA ligase beta subunit (692 aa).

It belongs to the class-II aminoacyl-tRNA synthetase family. Tetramer of two alpha and two beta subunits.

The protein resides in the cytoplasm. It catalyses the reaction tRNA(Gly) + glycine + ATP = glycyl-tRNA(Gly) + AMP + diphosphate. The sequence is that of Glycine--tRNA ligase beta subunit from Hahella chejuensis (strain KCTC 2396).